The following is a 218-amino-acid chain: Elongation factor Ts (218 aa).

Residues 82 to 85 (TDFV) form an involved in Mg(2+) ion dislocation from EF-Tu region.

It belongs to the EF-Ts family.

It localises to the cytoplasm. In terms of biological role, associates with the EF-Tu.GDP complex and induces the exchange of GDP to GTP. It remains bound to the aminoacyl-tRNA.EF-Tu.GTP complex up to the GTP hydrolysis stage on the ribosome. The chain is Elongation factor Ts from Prochlorococcus marinus (strain AS9601).